A 323-amino-acid polypeptide reads, in one-letter code: Olfactory receptor 2T35 (323 aa).

At 1-26 (MGMEGLLQNSTNFVLTGLITHPAFPG) the chain is on the extracellular side. Asn9 carries an N-linked (GlcNAc...) asparagine glycan. Residues 27 to 50 (LLFAVVFSIFVVAITANLVMILLI) form a helical membrane-spanning segment. The Cytoplasmic portion of the chain corresponds to 51–58 (HMDSRLHT). Residues 59 to 80 (PMYFLLSQLSIMDTIYICITVP) traverse the membrane as a helical segment. Topologically, residues 81–101 (KMLQDLLSKDKTISFLGCAVQ) are extracellular. A disulfide bridge links Cys98 with Cys189. Residues 102–120 (IFYLTLIGGEFFLLGLMAY) form a helical membrane-spanning segment. Topologically, residues 121-139 (DRYVAVCNPLRYPLLMNRR) are cytoplasmic. Residues 140–158 (VCLFMVVGSWVGGSLDGFM) form a helical membrane-spanning segment. Topologically, residues 159–195 (LTPVTMSFPFCRSREINHFFCEIPAVLKLSCTDTSLY) are extracellular. A helical transmembrane segment spans residues 196–219 (ETLMYACCVLMLLIPLSVISVSYT). The Cytoplasmic portion of the chain corresponds to 220-236 (HILLTVHRMNSAEGRRK). The chain crosses the membrane as a helical span at residues 237–259 (AFATCSSHIMVVSVFYGAAFYTN). The Extracellular portion of the chain corresponds to 260-272 (VLPHSYHTPEKDK). A helical transmembrane segment spans residues 273–292 (VVSAFYTILTPMLNPLIYSL). Topologically, residues 293 to 323 (RNKDVAAALRKVLGRCGSSQSIRVATVIRKG) are cytoplasmic.

Belongs to the G-protein coupled receptor 1 family.

The protein localises to the cell membrane. Functionally, odorant receptor. The sequence is that of Olfactory receptor 2T35 (OR2T35) from Homo sapiens (Human).